Consider the following 422-residue polypeptide: Dihydroorotase (422 aa).

Residues His61 and His63 each coordinate Zn(2+). Substrate is bound by residues 63–65 (HLR) and Asn95. Residue Asp153 participates in Zn(2+) binding. Asn278 contributes to the substrate binding site. Residue Asp305 coordinates Zn(2+). Asp305 is a catalytic residue. Substrate is bound by residues His309 and 322–323 (PG).

This sequence belongs to the metallo-dependent hydrolases superfamily. DHOase family. Class I DHOase subfamily. In terms of assembly, monomer. Forms a 1:1 stoichiometric complex with PyrB. The complex exists as an equilibrium mixture of heterohexamers, composed of 3 PyrC and 3 PyrB subunits, and dodecamers. The complex has both DHOase and ATCase activities. Requires Zn(2+) as cofactor.

The catalysed reaction is (S)-dihydroorotate + H2O = N-carbamoyl-L-aspartate + H(+). It functions in the pathway pyrimidine metabolism; UMP biosynthesis via de novo pathway; (S)-dihydroorotate from bicarbonate: step 3/3. The monomer has very low activity by itself. Activated several thousandfold by formation of a complex with PyrB aspartate carbamoyltransferase (ATCase). Its function is as follows. Catalyzes the reversible cyclization of carbamoyl aspartate to dihydroorotate. The sequence is that of Dihydroorotase from Aquifex aeolicus (strain VF5).